We begin with the raw amino-acid sequence, 585 residues long: tRNA 5-methylaminomethyl-2-thiouridine biosynthesis bifunctional protein MnmC (585 aa).

A tRNA (mnm(5)s(2)U34)-methyltransferase region spans residues 1–236; it reads MTPDGLYCDP…KRERLEAVWP (236 aa). Residues 254 to 585 are FAD-dependent cmnm(5)s(2)U34 oxidoreductase; sequence LGAGIAGASL…SRRAGQGAAG (332 aa). The tract at residues 564 to 585 is disordered; sequence EAMAPGRFAERRSRRAGQGAAG.

In the N-terminal section; belongs to the methyltransferase superfamily. tRNA (mnm(5)s(2)U34)-methyltransferase family. This sequence in the C-terminal section; belongs to the DAO family. Requires FAD as cofactor.

The protein resides in the cytoplasm. The enzyme catalyses 5-aminomethyl-2-thiouridine(34) in tRNA + S-adenosyl-L-methionine = 5-methylaminomethyl-2-thiouridine(34) in tRNA + S-adenosyl-L-homocysteine + H(+). In terms of biological role, catalyzes the last two steps in the biosynthesis of 5-methylaminomethyl-2-thiouridine (mnm(5)s(2)U) at the wobble position (U34) in tRNA. Catalyzes the FAD-dependent demodification of cmnm(5)s(2)U34 to nm(5)s(2)U34, followed by the transfer of a methyl group from S-adenosyl-L-methionine to nm(5)s(2)U34, to form mnm(5)s(2)U34. The chain is tRNA 5-methylaminomethyl-2-thiouridine biosynthesis bifunctional protein MnmC from Maricaulis maris (strain MCS10) (Caulobacter maris).